The primary structure comprises 1082 residues: Protein SPT23 (1082 aa).

3 disordered regions span residues 315–346 (NASN…PQSD), 376–417 (NNNN…FSDI), and 457–476 (ASAR…FMST). The span at 316 to 328 (ASNTTTPTSTSNA) shows a compositional bias: low complexity. Positions 329–346 (QVSPMTNDTRSFSSPQSD) are enriched in polar residues. Low complexity-rich tracts occupy residues 376 to 391 (NNNN…KTNT) and 399 to 416 (HFPS…SFSD). S468 is modified (phosphoserine). Positions 508-585 (PSIQRVIPAQ…DPSETSMRNN (78 aa)) constitute an IPT/TIG domain. ANK repeat units follow at residues 709–738 (RGRT…HLND) and 742–771 (FGFT…NIMK).

Functionally, dosage-dependent suppressor of Ty-induced promoter mutations. May exert its suppression effect through protein-protein interactions since does not present any of the motifs generally found in transcriptional activators or DNA binding proteins. The sequence is that of Protein SPT23 (SPT23) from Saccharomyces cerevisiae (strain ATCC 204508 / S288c) (Baker's yeast).